A 1203-amino-acid polypeptide reads, in one-letter code: Rho GTPase-activating protein gacGG (1203 aa).

RCC1 repeat units lie at residues 52–104, 106–148, 155–204, 206–255, 257–298, 299–359, and 361–410; these read TGEL…AIME, GLLY…VVAD, KRSV…AIVE, NEVF…ARSG, GNVC…VLSE, KGEI…EGRN, and LSVY…YLRG. The tract at residues 316-343 is disordered; sequence KLDVNSSPNINSSSGTTTPTTNTTTTTK. Positions 320 to 343 are enriched in low complexity; it reads NSSPNINSSSGTTTPTTNTTTTTK. Positions 381-594 constitute a Rho-GAP domain; sequence VDIAESMRRK…TIMKQYPLME (214 aa). Positions 649–679 form a coiled coil; it reads TLEIKNNQNNQNNQKENNNNNNNINNSNNNN. Disordered stretches follow at residues 657-725, 746-789, and 831-852; these read NNQN…TGNI, KDGN…NLSP, and FANS…LIGS. Composition is skewed to low complexity over residues 746–788 and 833–852; these read KDGN…PNLS and NSGS…LIGS. Positions 995–1078 form a coiled coil; it reads FDLLEKSMTE…ISNQNLSRVN (84 aa).

The protein resides in the cytoplasm. Its function is as follows. Rho GTPase-activating protein involved in the signal transduction pathway. This chain is Rho GTPase-activating protein gacGG (gacGG), found in Dictyostelium discoideum (Social amoeba).